A 498-amino-acid chain; its full sequence is MPEEYLNAQKMEKLERIKSRGINPYPSTFHPSHTSAQAVALLVEIETQENHLKEVLKLAGRIMNRRDMGKISFMDIRDGSGKMQIFFRQNDLDEASIELLKDLDLGDFIGVEGSLMRTRTGEPSLAATKVSMLSKSLLPLPEKWHGLQDVEKRYRQRYLDLISNADARQTFLTRSRVISVIRAFMNAKGFLEVETPVLQPEAGGALARPFITHHQALNCDFYMRIALELHLKRLIVGGFDRVYEIGRIFRNEGISTRHNPEFTMMESYQAYANYKDVMDFLEEMVSSVVKEISGGYTLPFGDITLDFTPPWPRLTMRDAVKQYAGIDFFDFPTKETLAAEMTRRKLKVDPAKDWGKLVDELVGEFVEPHLVQPTFLTDHPVAMSPLAKQKPEDPRLTERFEAICANMEIANAFSELNDPVEQRARFKEQLEKRSQLRTDESESVDEDFLAALAYGMPPTGGLGVGIDRLVMLFTNHDSIREVILFPALKDREDTKTQE.

Residues Glu-401 and Glu-408 each contribute to the Mg(2+) site.

It belongs to the class-II aminoacyl-tRNA synthetase family. In terms of assembly, homodimer. Mg(2+) is required as a cofactor.

The protein resides in the cytoplasm. It catalyses the reaction tRNA(Lys) + L-lysine + ATP = L-lysyl-tRNA(Lys) + AMP + diphosphate. In Dehalococcoides mccartyi (strain CBDB1), this protein is Lysine--tRNA ligase.